A 443-amino-acid chain; its full sequence is MASRIADSLFAFTGPQQCLPRAPKLASARLSPGVYAVRPIDLLLKGTRRTFLVPAKKRIGCIKAVFVPVAPPSADNAEDREQLAESYGFKQIGQDLPDNVTLKDIMDTLPKEVFEIDDVKAWKSVLISVTSYALGLFMIAKAPWYLLPLAWAWTGTAVTGFFVIGHDCAHKSFSKNKLVEDIVGTLAFLPLVYPYEPWRFKHDRHHAKTNMLVHDTAWQPVPPEEFDSSPVLRKAIIFGYGPIRPWLSIAHWVNWHFNLRKFRPSEVNRVKISLACVFAFMAVGWPLIIYKVGVLGWVKFWLMPWLGYHFWMSTFTMVHHTAPHIPFKPADEWNAAQAQLNGTVHCDYPSWIEILCHDINVHIPHHISPRIPSYNLRAAHQSIQENWGKYTNLATWNWRLMKTIMTVCHVYDKEENYIPFDRLAPEESQPITFLKKAMPDYAA.

The transit peptide at 1–64 (MASRIADSLF…AKKRIGCIKA (64 aa)) directs the protein to the chloroplast. Residues 166–170 (HDCAH) carry the Histidine box-1 motif. Positions 202-206 (HDRHH) match the Histidine box-2 motif. A Histidine box-3 motif is present at residues 362–366 (HIPHH).

The protein belongs to the fatty acid desaturase type 1 family.

Its subcellular location is the plastid. The protein localises to the chloroplast membrane. It catalyses the reaction a (9Z)-octadecenoyl-containing glycerolipid + 2 reduced [2Fe-2S]-[ferredoxin] + O2 + 2 H(+) = a (9Z,12Z)-octadecadienoyl-containing glycerolipid + 2 oxidized [2Fe-2S]-[ferredoxin] + 2 H2O. Its pathway is lipid metabolism; polyunsaturated fatty acid biosynthesis. Its function is as follows. Chloroplast omega-6 fatty acid desaturase introduces the second double bond in the biosynthesis of 16:3 and 18:3 fatty acids, important constituents of plant membranes. It is thought to use ferredoxin as an electron donor and to act on fatty acids esterified to galactolipids, sulfolipids and phosphatidylglycerol. In Brassica napus (Rape), this protein is Omega-6 fatty acid desaturase, chloroplastic.